A 123-amino-acid chain; its full sequence is VQ motif-containing protein 29 (123 aa).

The segment at 24 to 55 (TKNYLTSLHSTRKQPSKPLKRPAISSPLNPMH) is disordered. Basic residues predominate over residues 33-43 (STRKQPSKPLK). A VQ motif is present at residues 66–75 (FKVLVQRLTG). Basic and acidic residues predominate over residues 77–94 (PEHETVQAKPLKTSDDAA). A disordered region spans residues 77–123 (PEHETVQAKPLKTSDDAAKQSSSSFAFDPSSSWGDFSFQNPANISRW). A compositionally biased stretch (low complexity) spans 97-108 (SSSSFAFDPSSS). Over residues 109–123 (WGDFSFQNPANISRW) the composition is skewed to polar residues.

Its subcellular location is the nucleus. In terms of biological role, may function as negative regulator of flowering transition. This chain is VQ motif-containing protein 29, found in Arabidopsis thaliana (Mouse-ear cress).